A 181-amino-acid chain; its full sequence is Negative modulator of initiation of replication (181 aa).

Interaction with DNA stretches follow at residues 87–88 (AV), 116–120 (RTRVY), and 150–156 (NTNTGRK).

Belongs to the SeqA family. As to quaternary structure, homodimer. Polymerizes to form helical filaments.

The protein resides in the cytoplasm. Its function is as follows. Negative regulator of replication initiation, which contributes to regulation of DNA replication and ensures that replication initiation occurs exactly once per chromosome per cell cycle. Binds to pairs of hemimethylated GATC sequences in the oriC region, thus preventing assembly of replication proteins and re-initiation at newly replicated origins. Repression is relieved when the region becomes fully methylated. The protein is Negative modulator of initiation of replication of Shigella dysenteriae serotype 1 (strain Sd197).